The sequence spans 175 residues: Large ribosomal subunit protein uL10 (175 aa).

The protein belongs to the universal ribosomal protein uL10 family. Part of the ribosomal stalk of the 50S ribosomal subunit. The N-terminus interacts with L11 and the large rRNA to form the base of the stalk. The C-terminus forms an elongated spine to which L12 dimers bind in a sequential fashion forming a multimeric L10(L12)X complex.

Forms part of the ribosomal stalk, playing a central role in the interaction of the ribosome with GTP-bound translation factors. The polypeptide is Large ribosomal subunit protein uL10 (Halorhodospira halophila (strain DSM 244 / SL1) (Ectothiorhodospira halophila (strain DSM 244 / SL1))).